Consider the following 203-residue polypeptide: Serine hydrolase-like protein (203 aa).

Residues 33-145 (PPVLCLHGWL…FLLESDEMEN (113 aa)) form the AB hydrolase-1 domain. Residue Ser-108 is part of the active site.

Belongs to the AB hydrolase superfamily.

Its function is as follows. Putative serine hydrolase. The chain is Serine hydrolase-like protein (SERHL) from Homo sapiens (Human).